The chain runs to 488 residues: MRAEIGPDFRPHYTFGDAYPASERAHVNWELSAPVWHTAQMGSTTHREVAKLDRVPLPVEAARVAATGWQVTRTAVRFIGRLPRKGPWQQKVIKELPQTFADLGPTYVKFGQIIASSPGAFGESLSREFRGLLDRVPPAKTDEVHKLFVEELGDEPARLFASFEEEPFASASIAQVHYATLRSGEEVVVKIQRPGIRRRVAADLQILKRFAQTVELAKLGRRLSAQDVVADFADNLAEELDFRLEAQSMEAWVSHLHASPLGKNIRVPQVHWDFTTERVLTMERVHGIRIDNAAAIRKAGFDGVELVKALLFSVFEGGLRHGLFHGDLHAGNLYVDEAGRIVFFDFGIMGRIDPRTRWLLRELVYALLVKKDHAAAGKIVVLMGAVGTMKPETQAAKDLERFATPLTMQSLGDMSYADIGRQLSALADAYDVKLPRELVLIGKQFLYVERYMKLLAPRWQMMSDPQLTGYFANFMVEVSREHQSDIEV.

It belongs to the protein kinase superfamily. ADCK protein kinase family.

This is an uncharacterized protein from Mycobacterium tuberculosis (strain CDC 1551 / Oshkosh).